Reading from the N-terminus, the 199-residue chain is Thymidine kinase (199 aa).

Residues 15-22 and 88-91 each bind ATP; these read GSMFSGKS and DEIQ. The active-site Proton acceptor is the Glu-89. 4 residues coordinate Zn(2+): Cys-145, Cys-148, Cys-183, and His-186.

Belongs to the thymidine kinase family. In terms of assembly, homotetramer.

It localises to the cytoplasm. It catalyses the reaction thymidine + ATP = dTMP + ADP + H(+). This Staphylococcus haemolyticus (strain JCSC1435) protein is Thymidine kinase.